We begin with the raw amino-acid sequence, 197 residues long: dITP/XTP pyrophosphatase (197 aa).

8–13 (TGNAGK) provides a ligand contact to substrate. Glu40 and Asp69 together coordinate Mg(2+). Asp69 acts as the Proton acceptor in catalysis. Residues Ser70, 154–157 (FGYD), Lys177, and 182–183 (HR) contribute to the substrate site.

This sequence belongs to the HAM1 NTPase family. In terms of assembly, homodimer. Mg(2+) is required as a cofactor.

It catalyses the reaction XTP + H2O = XMP + diphosphate + H(+). The enzyme catalyses dITP + H2O = dIMP + diphosphate + H(+). The catalysed reaction is ITP + H2O = IMP + diphosphate + H(+). Pyrophosphatase that catalyzes the hydrolysis of nucleoside triphosphates to their monophosphate derivatives, with a high preference for the non-canonical purine nucleotides XTP (xanthosine triphosphate), dITP (deoxyinosine triphosphate) and ITP. Seems to function as a house-cleaning enzyme that removes non-canonical purine nucleotides from the nucleotide pool, thus preventing their incorporation into DNA/RNA and avoiding chromosomal lesions. The chain is dITP/XTP pyrophosphatase (rdgB) from Salmonella paratyphi A (strain ATCC 9150 / SARB42).